We begin with the raw amino-acid sequence, 604 residues long: Sulfite reductase [NADPH] flavoprotein alpha-component (604 aa).

The Flavodoxin-like domain maps to 66–204; it reads VTVLSASQTG…SANAWTDNIA (139 aa). FMN-binding positions include 72-77, 119-122, and 155-164; these read SQTGNA, STQG, and LGDSSYPNFC. An FAD-binding FR-type domain is found at 239–453; that stretch reads AAPFPAALLA…VERNDGFRLP (215 aa). Residues T327, Q361, 391 to 394, 409 to 411, and 424 to 427 contribute to the FAD site; these read RLYS, TVG, and GGAS. NADP(+) contacts are provided by residues 524–525, 530–534, and D566; these read SR and KIYVQ. Y604 is a binding site for FAD.

It belongs to the NADPH-dependent sulphite reductase flavoprotein subunit CysJ family. In the N-terminal section; belongs to the flavodoxin family. This sequence in the C-terminal section; belongs to the flavoprotein pyridine nucleotide cytochrome reductase family. As to quaternary structure, alpha(8)-beta(8). The alpha component is a flavoprotein, the beta component is a hemoprotein. The cofactor is FAD. FMN serves as cofactor.

It carries out the reaction hydrogen sulfide + 3 NADP(+) + 3 H2O = sulfite + 3 NADPH + 4 H(+). It participates in sulfur metabolism; hydrogen sulfide biosynthesis; hydrogen sulfide from sulfite (NADPH route): step 1/1. Its function is as follows. Component of the sulfite reductase complex that catalyzes the 6-electron reduction of sulfite to sulfide. This is one of several activities required for the biosynthesis of L-cysteine from sulfate. The flavoprotein component catalyzes the electron flow from NADPH -&gt; FAD -&gt; FMN to the hemoprotein component. The chain is Sulfite reductase [NADPH] flavoprotein alpha-component from Neisseria meningitidis serogroup B (strain ATCC BAA-335 / MC58).